A 318-amino-acid chain; its full sequence is NAD kinase (318 aa).

The active-site Proton acceptor is Asp-80. Residues 80–81 (DG), Arg-85, 155–156 (NE), Asp-185, and 196–201 (TAYAFS) each bind NAD(+).

The protein belongs to the NAD kinase family. A divalent metal cation is required as a cofactor.

It localises to the cytoplasm. The enzyme catalyses NAD(+) + ATP = ADP + NADP(+) + H(+). In terms of biological role, involved in the regulation of the intracellular balance of NAD and NADP, and is a key enzyme in the biosynthesis of NADP. Catalyzes specifically the phosphorylation on 2'-hydroxyl of the adenosine moiety of NAD to yield NADP. This is NAD kinase from Corynebacterium efficiens (strain DSM 44549 / YS-314 / AJ 12310 / JCM 11189 / NBRC 100395).